Here is a 336-residue protein sequence, read N- to C-terminus: D-alanine--D-alanine ligase (336 aa).

Positions 124-330 (KMWFSALGIP…FTQYLSLVIN (207 aa)) constitute an ATP-grasp domain. ATP is bound at residue 154-209 (ALEKWGSIFVKAASQGSSVGCYKVDEASKVLGVLKDAFGYAPYVIVEKTIKARELE). Mg(2+)-binding residues include Asp284, Glu297, and Asn299.

The protein belongs to the D-alanine--D-alanine ligase family. Requires Mg(2+) as cofactor. It depends on Mn(2+) as a cofactor.

Its subcellular location is the cytoplasm. The catalysed reaction is 2 D-alanine + ATP = D-alanyl-D-alanine + ADP + phosphate + H(+). The protein operates within cell wall biogenesis; peptidoglycan biosynthesis. Cell wall formation. This chain is D-alanine--D-alanine ligase, found in Shewanella oneidensis (strain ATCC 700550 / JCM 31522 / CIP 106686 / LMG 19005 / NCIMB 14063 / MR-1).